Here is a 121-residue protein sequence, read N- to C-terminus: Small ribosomal subunit protein uS13 (121 aa).

Residues 91-121 (HRKGLPLRGQRTRTNARTRKGPRKAGVALKK) are disordered.

It belongs to the universal ribosomal protein uS13 family. As to quaternary structure, part of the 30S ribosomal subunit. Forms a loose heterodimer with protein S19. Forms two bridges to the 50S subunit in the 70S ribosome.

Functionally, located at the top of the head of the 30S subunit, it contacts several helices of the 16S rRNA. In the 70S ribosome it contacts the 23S rRNA (bridge B1a) and protein L5 of the 50S subunit (bridge B1b), connecting the 2 subunits; these bridges are implicated in subunit movement. Contacts the tRNAs in the A and P-sites. The polypeptide is Small ribosomal subunit protein uS13 (Cupriavidus pinatubonensis (strain JMP 134 / LMG 1197) (Cupriavidus necator (strain JMP 134))).